The primary structure comprises 291 residues: Putative transport permease ycf38 (291 aa).

The next 6 membrane-spanning stretches (helical) occupy residues 47 to 67 (ATLMAGIIQPLLWLVLFGGLF), 87 to 107 (SGIIVFTSFTGALNSGLPLMF), 135 to 155 (FMTCLSLIQVIFIVIASLFMG), 165 to 185 (LIFALIVLLVTVGVTMLSLAL), 195 to 215 (LLALILVVNLPFLFSSTALAP), and 262 to 282 (ISLGQIISLLLFLDVIGAYIV). Positions 47-289 (ATLMAGIIQP…YIVSNILKAR (243 aa)) constitute an ABC transmembrane type-2 domain.

The protein belongs to the ABC-2 integral membrane protein family.

The protein resides in the plastid. It is found in the chloroplast membrane. This Porphyra purpurea (Red seaweed) protein is Putative transport permease ycf38 (ycf38).